The sequence spans 412 residues: Short-chain specific acyl-CoA dehydrogenase, mitochondrial (412 aa).

The transit peptide at 1-24 (MAAALLARARGPLRRALGVRDWRR) directs the protein to the mitochondrion. Thr-27 bears the Phosphothreonine mark. Lys-51 bears the N6-acetyllysine; alternate mark. At Lys-51 the chain carries N6-succinyllysine; alternate. Position 72 is an N6-acetyllysine (Lys-72). Lys-129 carries the post-translational modification N6-acetyllysine; alternate. The residue at position 129 (Lys-129) is an N6-succinyllysine; alternate. Residues 152–161 (FALSEPGNGS) and 185–187 (WIT) contribute to the FAD site. Substrate is bound at residue Ser-161. Position 208 is an N6-acetyllysine (Lys-208). Lys-262 is modified (N6-acetyllysine; alternate). Position 262 is an N6-succinyllysine; alternate (Lys-262). 269–272 (DMGR) contacts substrate. Position 292 is an N6-acetyllysine (Lys-292). Arg-297 is a binding site for FAD. N6-acetyllysine; alternate is present on Lys-306. Lys-306 is subject to N6-succinyllysine; alternate. Residues Gln-308 and 365–369 (QILGG) each bind FAD. Glu-392 (proton acceptor) is an active-site residue. Gly-393 contacts substrate. 394-396 (TSE) contacts FAD.

It belongs to the acyl-CoA dehydrogenase family. In terms of assembly, homotetramer. The cofactor is FAD.

Its subcellular location is the mitochondrion matrix. It carries out the reaction a short-chain 2,3-saturated fatty acyl-CoA + oxidized [electron-transfer flavoprotein] + H(+) = a short-chain (2E)-enoyl-CoA + reduced [electron-transfer flavoprotein]. The enzyme catalyses butanoyl-CoA + oxidized [electron-transfer flavoprotein] + H(+) = (2E)-butenoyl-CoA + reduced [electron-transfer flavoprotein]. It catalyses the reaction pentanoyl-CoA + oxidized [electron-transfer flavoprotein] + H(+) = (2E)-pentenoyl-CoA + reduced [electron-transfer flavoprotein]. The catalysed reaction is hexanoyl-CoA + oxidized [electron-transfer flavoprotein] + H(+) = (2E)-hexenoyl-CoA + reduced [electron-transfer flavoprotein]. Its pathway is lipid metabolism; mitochondrial fatty acid beta-oxidation. In terms of biological role, short-chain specific acyl-CoA dehydrogenase is one of the acyl-CoA dehydrogenases that catalyze the first step of mitochondrial fatty acid beta-oxidation, an aerobic process breaking down fatty acids into acetyl-CoA and allowing the production of energy from fats. The first step of fatty acid beta-oxidation consists in the removal of one hydrogen from C-2 and C-3 of the straight-chain fatty acyl-CoA thioester, resulting in the formation of trans-2-enoyl-CoA. Among the different mitochondrial acyl-CoA dehydrogenases, short-chain specific acyl-CoA dehydrogenase acts specifically on acyl-CoAs with saturated 4 to 6 carbons long primary chains. This chain is Short-chain specific acyl-CoA dehydrogenase, mitochondrial (Acads), found in Mus musculus (Mouse).